Consider the following 182-residue polypeptide: Transcription termination/antitermination protein NusG (182 aa).

This sequence belongs to the NusG family.

Its function is as follows. Participates in transcription elongation, termination and antitermination. This is Transcription termination/antitermination protein NusG from Chlamydia muridarum (strain MoPn / Nigg).